The primary structure comprises 243 residues: 7-carboxy-7-deazaguanine synthase (243 aa).

Substrate is bound by residues Ile15–Gly17 and Arg30. The Radical SAM core domain maps to Val21–Asn239. The [4Fe-4S] cluster site is built by Cys34, Cys38, and Cys41. Ser43 lines the Mg(2+) pocket. Ser81 is a binding site for substrate. Residues Gly83 and Ser127–Lys129 each bind S-adenosyl-L-methionine.

It belongs to the radical SAM superfamily. 7-carboxy-7-deazaguanine synthase family. Homodimer. Requires [4Fe-4S] cluster as cofactor. S-adenosyl-L-methionine is required as a cofactor. The cofactor is Mg(2+).

It catalyses the reaction 6-carboxy-5,6,7,8-tetrahydropterin + H(+) = 7-carboxy-7-deazaguanine + NH4(+). The protein operates within purine metabolism; 7-cyano-7-deazaguanine biosynthesis. Catalyzes the complex heterocyclic radical-mediated conversion of 6-carboxy-5,6,7,8-tetrahydropterin (CPH4) to 7-carboxy-7-deazaguanine (CDG), a step common to the biosynthetic pathways of all 7-deazapurine-containing compounds. The sequence is that of 7-carboxy-7-deazaguanine synthase from Bacillus subtilis (strain 168).